An 84-amino-acid polypeptide reads, in one-letter code: Sulfur carrier protein TusA (84 aa).

The Cysteine persulfide intermediate role is filled by Cys19.

The protein belongs to the sulfur carrier protein TusA family. As to quaternary structure, interacts with IscS.

The protein resides in the cytoplasm. Its pathway is tRNA modification. In terms of biological role, sulfur carrier protein involved in sulfur trafficking in the cell. Part of a sulfur-relay system required for 2-thiolation during synthesis of 2-thiouridine of the modified wobble base 5-methylaminomethyl-2-thiouridine (mnm(5)s(2)U) in tRNA. Interacts with IscS and stimulates its cysteine desulfurase activity. Accepts an activated sulfur from IscS, which is then transferred to TusD, and thus determines the direction of sulfur flow from IscS to 2-thiouridine formation. Also appears to be involved in sulfur transfer for the biosynthesis of molybdopterin. This Photorhabdus laumondii subsp. laumondii (strain DSM 15139 / CIP 105565 / TT01) (Photorhabdus luminescens subsp. laumondii) protein is Sulfur carrier protein TusA.